The sequence spans 91 residues: ATP synthase epsilon chain (91 aa).

Belongs to the ATPase epsilon chain family. In terms of assembly, F-type ATPases have 2 components, CF(1) - the catalytic core - and CF(0) - the membrane proton channel. CF(1) has five subunits: alpha(3), beta(3), gamma(1), delta(1), epsilon(1). CF(0) has three main subunits: a, b and c.

The protein localises to the cell membrane. Produces ATP from ADP in the presence of a proton gradient across the membrane. This chain is ATP synthase epsilon chain (atpC), found in Micrococcus luteus (strain ATCC 4698 / DSM 20030 / JCM 1464 / CCM 169 / CCUG 5858 / IAM 1056 / NBRC 3333 / NCIMB 9278 / NCTC 2665 / VKM Ac-2230) (Micrococcus lysodeikticus).